The sequence spans 285 residues: Sulfotransferase 2A1 (285 aa).

Positions 44, 45, 46, 47, 48, and 49 each coordinate 3'-phosphoadenylyl sulfate. His99 acts as the Proton acceptor in catalysis. Arg121, Ser129, Tyr184, Ser218, Met223, Arg247, Lys248, and Gly249 together coordinate 3'-phosphoadenylyl sulfate. Position 251 is a phosphoserine (Ser251).

The protein belongs to the sulfotransferase 1 family. In terms of assembly, homodimer. Predominanly expressed in liver. Detected also in adrenal gland and in jejunum.

The protein resides in the cytoplasm. It localises to the cytosol. The enzyme catalyses an alcohol + 3'-phosphoadenylyl sulfate = an alkyl sulfate + adenosine 3',5'-bisphosphate + H(+). It catalyses the reaction 3beta-hydroxyandrost-5-en-17-one + 3'-phosphoadenylyl sulfate = dehydroepiandrosterone 3-sulfate + adenosine 3',5'-bisphosphate + H(+). It carries out the reaction taurolithocholate + 3'-phosphoadenylyl sulfate = taurolithocholate 3-sulfate + adenosine 3',5'-bisphosphate + H(+). The catalysed reaction is lithocholate + 3'-phosphoadenylyl sulfate = lithocholate sulfate + adenosine 3',5'-bisphosphate + H(+). The enzyme catalyses (24S)-hydroxycholesterol + 3'-phosphoadenylyl sulfate = (24S)-hydroxycholesterol 24-sulfate + adenosine 3',5'-bisphosphate + H(+). It catalyses the reaction (24S)-hydroxycholesterol + 3'-phosphoadenylyl sulfate = (24S)-hydroxycholesterol 3-sulfate + adenosine 3',5'-bisphosphate + H(+). It carries out the reaction (24S)-hydroxycholesterol 24-sulfate + 3'-phosphoadenylyl sulfate = (24S)-hydroxycholesterol 3,24-disulfate + adenosine 3',5'-bisphosphate + H(+). The catalysed reaction is pregnenolone + 3'-phosphoadenylyl sulfate = pregnenolone sulfate + adenosine 3',5'-bisphosphate + H(+). The enzyme catalyses androsterone + 3'-phosphoadenylyl sulfate = androsterone 3alpha-sulfate + adenosine 3',5'-bisphosphate + H(+). Sulfotransferase that utilizes 3'-phospho-5'-adenylyl sulfate (PAPS) as sulfonate donor to catalyze the sulfonation of steroids and bile acids in the liver and adrenal glands. Mediates the sulfation of a wide range of steroids and sterols, including pregnenolone, androsterone, DHEA, bile acids, cholesterol and as well many xenobiotics that contain alcohol and phenol functional groups. Sulfonation increases the water solubility of most compounds, and therefore their renal excretion, but it can also result in bioactivation to form active metabolites. Plays an important role in maintening steroid and lipid homeostasis. Plays a key role in bile acid metabolism. In addition, catalyzes the metabolic activation of potent carcinogenic polycyclic arylmethanols. In Macaca fascicularis (Crab-eating macaque), this protein is Sulfotransferase 2A1 (SULT2A1).